A 309-amino-acid chain; its full sequence is THAP domain-containing protein 7 (309 aa).

The THAP-type zinc-finger motif lies at 1 to 93 (MPRHCSAAGC…LKEGAVPTIF (93 aa)). S162 carries the post-translational modification Phosphoserine. Positions 176-210 (SDLLGPLGAQADEAGCSTQPSPEQHPSPLEPQPAS) are disordered. Over residues 198–209 (EQHPSPLEPQPA) the composition is skewed to pro residues. The residue at position 210 (S210) is a Phosphoserine. The short motif at 229–232 (EHSY) is the HCFC1-binding motif (HBM) element.

In terms of assembly, forms homodimers. Interacts with HDAC3 and nuclear hormone receptor corepressors. Interacts via HBM with HCFC1.

Its subcellular location is the nucleus. It localises to the chromosome. Chromatin-associated, histone tail-binding protein that represses transcription via recruitment of HDAC3 and nuclear hormone receptor corepressors. The protein is THAP domain-containing protein 7 (Thap7) of Mus musculus (Mouse).